The sequence spans 200 residues: Regulator of G-protein signaling 16 (200 aa).

2 S-palmitoyl cysteine lipidation sites follow: Cys-2 and Cys-12. In terms of domain architecture, RGS spans 65 to 181 (SFDLLLSSKN…LKSPAYRDLA (117 aa)). 2 positions are modified to phosphotyrosine: Tyr-168 and Tyr-177.

Interacts with GNAI1 and GNAQ. Interacts with GNAI3, GNAI3 and GNAO1. In terms of assembly, (Microbial infection) Interacts with porcine circovirus 2 ORF3 protein. Palmitoylated on Cys-2 and/or Cys-12. Post-translationally, phosphorylated. Phosphorylation at Tyr-168 by EGFR enhances GTPase accelerating (GAP) activity toward GNAI1.

The protein resides in the membrane. In terms of biological role, regulates G protein-coupled receptor signaling cascades. Inhibits signal transduction by increasing the GTPase activity of G protein alpha subunits, thereby driving them into their inactive GDP-bound form. Plays an important role in the phototransduction cascade by regulating the lifetime and effective concentration of activated transducin alpha. May regulate extra and intracellular mitogenic signals. Its function is as follows. (Microbial infection) Gets inactivated and/or degraded by porcine circovirus 2 ORF3 protein, leading to enhanced expression of IL-6 and IL-8 in infected lymphocytes. This would explain chronic inflammatory response of PCV2 infected pigs. The chain is Regulator of G-protein signaling 16 (RGS16) from Sus scrofa (Pig).